Consider the following 156-residue polypeptide: MPRRRVIGQRKILPDPKFGSELLAKFVNIVMLDGKKSTAEKIVYGALNVAAEKSGKSHLEIFETALDNIRPQVEVKSRRVGGSTYQVPVEVRPVRRNALGMRWLVDAARKRGEKSMGLRLAQEIVDAADNKGTAVKKREDVHRMAEANKAFAHYRW.

It belongs to the universal ribosomal protein uS7 family. In terms of assembly, part of the 30S ribosomal subunit. Contacts proteins S9 and S11.

Its function is as follows. One of the primary rRNA binding proteins, it binds directly to 16S rRNA where it nucleates assembly of the head domain of the 30S subunit. Is located at the subunit interface close to the decoding center, probably blocks exit of the E-site tRNA. This chain is Small ribosomal subunit protein uS7, found in Pseudoalteromonas translucida (strain TAC 125).